The sequence spans 263 residues: Small ribosomal subunit protein uS3 (263 aa).

The region spanning 39 to 107 (VREYLKKKLK…PVHVNIEEIR (69 aa)) is the KH type-2 domain. The disordered stretch occupies residues 211-263 (GELPPEAATPREEERRPRRAPRGDRPDGGRPGRPGGRGRGPRKADAAPAPEGE). Residues 219–240 (TPREEERRPRRAPRGDRPDGGR) are compositionally biased toward basic and acidic residues.

Belongs to the universal ribosomal protein uS3 family. Part of the 30S ribosomal subunit. Forms a tight complex with proteins S10 and S14.

In terms of biological role, binds the lower part of the 30S subunit head. Binds mRNA in the 70S ribosome, positioning it for translation. The chain is Small ribosomal subunit protein uS3 from Bordetella petrii (strain ATCC BAA-461 / DSM 12804 / CCUG 43448).